Here is a 366-residue protein sequence, read N- to C-terminus: UDP-N-acetylglucosamine--N-acetylmuramyl-(pentapeptide) pyrophosphoryl-undecaprenol N-acetylglucosamine transferase (366 aa).

UDP-N-acetyl-alpha-D-glucosamine-binding positions include 22 to 24, Asn134, Arg170, Ser198, Ile253, and Gln298; that span reads TGG.

This sequence belongs to the glycosyltransferase 28 family. MurG subfamily.

The protein localises to the cell inner membrane. It carries out the reaction di-trans,octa-cis-undecaprenyl diphospho-N-acetyl-alpha-D-muramoyl-L-alanyl-D-glutamyl-meso-2,6-diaminopimeloyl-D-alanyl-D-alanine + UDP-N-acetyl-alpha-D-glucosamine = di-trans,octa-cis-undecaprenyl diphospho-[N-acetyl-alpha-D-glucosaminyl-(1-&gt;4)]-N-acetyl-alpha-D-muramoyl-L-alanyl-D-glutamyl-meso-2,6-diaminopimeloyl-D-alanyl-D-alanine + UDP + H(+). The protein operates within cell wall biogenesis; peptidoglycan biosynthesis. In terms of biological role, cell wall formation. Catalyzes the transfer of a GlcNAc subunit on undecaprenyl-pyrophosphoryl-MurNAc-pentapeptide (lipid intermediate I) to form undecaprenyl-pyrophosphoryl-MurNAc-(pentapeptide)GlcNAc (lipid intermediate II). This Xylella fastidiosa (strain M12) protein is UDP-N-acetylglucosamine--N-acetylmuramyl-(pentapeptide) pyrophosphoryl-undecaprenol N-acetylglucosamine transferase.